The following is a 364-amino-acid chain: Delta(7)-sterol 5(6)-desaturase (364 aa).

The next 3 membrane-spanning stretches (helical) occupy residues 94-114 (FFSL…ITAS), 142-162 (LAVS…MLEL), and 181-201 (KLLI…YLAH). One can recognise a Fatty acid hydroxylase domain in the interval 188–312 (TFIFFTDCGI…FTTLWDRLGG (125 aa)). Residues 201–205 (HRWLH) carry the Histidine box-1 motif. Positions 214–218 (HKPHH) match the Histidine box-2 motif. Residues 249 to 269 (ILPLHKISYLILFTFVNFWSV) form a helical membrane-spanning segment. A Histidine box-3 motif is present at residues 289–293 (HTVHH).

This sequence belongs to the sterol desaturase family. It depends on Fe cation as a cofactor.

The protein resides in the endoplasmic reticulum membrane. The catalysed reaction is a Delta(7)-sterol + 2 Fe(II)-[cytochrome b5] + O2 + 2 H(+) = a Delta(5),Delta(7)-sterol + 2 Fe(III)-[cytochrome b5] + 2 H2O. Its pathway is steroid metabolism; ergosterol biosynthesis; ergosterol from zymosterol: step 3/5. In terms of biological role, catalyzes the introduction of a C-5 double bond in the B ring of ergosterol. May contribute to the regulation of ergosterol biosynthesis. In Candida glabrata (strain ATCC 2001 / BCRC 20586 / JCM 3761 / NBRC 0622 / NRRL Y-65 / CBS 138) (Yeast), this protein is Delta(7)-sterol 5(6)-desaturase (ERG3).